A 33-amino-acid polypeptide reads, in one-letter code: MNLEIVFQLTSLVLILAAGPLVVVLLSARGGNL.

Residues 5–25 (IVFQLTSLVLILAAGPLVVVL) traverse the membrane as a helical segment.

The protein belongs to the Psb30/Ycf12 family. In terms of assembly, PSII is composed of 1 copy each of membrane proteins PsbA, PsbB, PsbC, PsbD, PsbE, PsbF, PsbH, PsbI, PsbJ, PsbK, PsbL, PsbM, PsbT, PsbX, PsbY, PsbZ, Psb30/Ycf12, peripheral proteins of the oxygen-evolving complex and a large number of cofactors. It forms dimeric complexes.

The protein localises to the plastid. The protein resides in the chloroplast thylakoid membrane. A core subunit of photosystem II (PSII), probably helps stabilize the reaction center. The protein is Photosystem II reaction center protein Psb30 of Tetradesmus obliquus (Green alga).